The chain runs to 199 residues: Octanoyltransferase (199 aa).

In terms of domain architecture, BPL/LPL catalytic spans 27 to 199; the sequence is SNSYDELWLL…FVQYFLTQFK (173 aa). Substrate contacts are provided by residues 66–73, 133–135, and 146–148; these read RGGQVTYH, SIG, and GIA. Catalysis depends on cysteine 164, which acts as the Acyl-thioester intermediate.

This sequence belongs to the LipB family.

The protein localises to the cytoplasm. The enzyme catalyses octanoyl-[ACP] + L-lysyl-[protein] = N(6)-octanoyl-L-lysyl-[protein] + holo-[ACP] + H(+). It participates in protein modification; protein lipoylation via endogenous pathway; protein N(6)-(lipoyl)lysine from octanoyl-[acyl-carrier-protein]: step 1/2. In terms of biological role, catalyzes the transfer of endogenously produced octanoic acid from octanoyl-acyl-carrier-protein onto the lipoyl domains of lipoate-dependent enzymes. Lipoyl-ACP can also act as a substrate although octanoyl-ACP is likely to be the physiological substrate. The sequence is that of Octanoyltransferase from Legionella pneumophila (strain Lens).